A 414-amino-acid chain; its full sequence is Riboflavin biosynthesis protein RibBA (414 aa).

A DHBP synthase region spans residues 1 to 204 (MTRFDTIERA…IADMIAWRRK (204 aa)). Residues 28 to 29 (RE), aspartate 33, 141 to 145 (RPGHT), and glutamate 165 contribute to the D-ribulose 5-phosphate site. Glutamate 29 provides a ligand contact to Mg(2+). A Mg(2+)-binding site is contributed by histidine 144. Residues 205 to 414 (HEKQVVRVAE…DDLDLGETAQ (210 aa)) are GTP cyclohydrolase II. 255–259 (RVHSE) contacts GTP. Cysteine 260, cysteine 271, and cysteine 273 together coordinate Zn(2+). GTP is bound by residues glutamine 276, 299 to 301 (EGR), and threonine 321. The active-site Proton acceptor; for GTP cyclohydrolase activity is the aspartate 333. Arginine 335 acts as the Nucleophile; for GTP cyclohydrolase activity in catalysis. Threonine 356 and lysine 361 together coordinate GTP.

The protein in the N-terminal section; belongs to the DHBP synthase family. This sequence in the C-terminal section; belongs to the GTP cyclohydrolase II family. Mg(2+) serves as cofactor. The cofactor is Mn(2+). Zn(2+) is required as a cofactor.

The catalysed reaction is D-ribulose 5-phosphate = (2S)-2-hydroxy-3-oxobutyl phosphate + formate + H(+). It catalyses the reaction GTP + 4 H2O = 2,5-diamino-6-hydroxy-4-(5-phosphoribosylamino)-pyrimidine + formate + 2 phosphate + 3 H(+). It participates in cofactor biosynthesis; riboflavin biosynthesis; 2-hydroxy-3-oxobutyl phosphate from D-ribulose 5-phosphate: step 1/1. Its pathway is cofactor biosynthesis; riboflavin biosynthesis; 5-amino-6-(D-ribitylamino)uracil from GTP: step 1/4. In terms of biological role, catalyzes the conversion of D-ribulose 5-phosphate to formate and 3,4-dihydroxy-2-butanone 4-phosphate. Catalyzes the conversion of GTP to 2,5-diamino-6-ribosylamino-4(3H)-pyrimidinone 5'-phosphate (DARP), formate and pyrophosphate. This chain is Riboflavin biosynthesis protein RibBA, found in Nocardia farcinica (strain IFM 10152).